Reading from the N-terminus, the 237-residue chain is 2-C-methyl-D-erythritol 4-phosphate cytidylyltransferase (237 aa).

This sequence belongs to the IspD/TarI cytidylyltransferase family. IspD subfamily.

The enzyme catalyses 2-C-methyl-D-erythritol 4-phosphate + CTP + H(+) = 4-CDP-2-C-methyl-D-erythritol + diphosphate. Its pathway is isoprenoid biosynthesis; isopentenyl diphosphate biosynthesis via DXP pathway; isopentenyl diphosphate from 1-deoxy-D-xylulose 5-phosphate: step 2/6. Its function is as follows. Catalyzes the formation of 4-diphosphocytidyl-2-C-methyl-D-erythritol from CTP and 2-C-methyl-D-erythritol 4-phosphate (MEP). The polypeptide is 2-C-methyl-D-erythritol 4-phosphate cytidylyltransferase (Paraburkholderia xenovorans (strain LB400)).